Reading from the N-terminus, the 417-residue chain is Serine hydroxymethyltransferase (417 aa).

(6S)-5,6,7,8-tetrahydrofolate is bound by residues leucine 121 and 125–127 (GHL). Residue lysine 229 is modified to N6-(pyridoxal phosphate)lysine. A (6S)-5,6,7,8-tetrahydrofolate-binding site is contributed by 355–357 (SPF).

It belongs to the SHMT family. As to quaternary structure, homodimer. Pyridoxal 5'-phosphate serves as cofactor.

It is found in the cytoplasm. The enzyme catalyses (6R)-5,10-methylene-5,6,7,8-tetrahydrofolate + glycine + H2O = (6S)-5,6,7,8-tetrahydrofolate + L-serine. It participates in one-carbon metabolism; tetrahydrofolate interconversion. Its pathway is amino-acid biosynthesis; glycine biosynthesis; glycine from L-serine: step 1/1. Catalyzes the reversible interconversion of serine and glycine with tetrahydrofolate (THF) serving as the one-carbon carrier. This reaction serves as the major source of one-carbon groups required for the biosynthesis of purines, thymidylate, methionine, and other important biomolecules. Also exhibits THF-independent aldolase activity toward beta-hydroxyamino acids, producing glycine and aldehydes, via a retro-aldol mechanism. The sequence is that of Serine hydroxymethyltransferase from Shewanella amazonensis (strain ATCC BAA-1098 / SB2B).